The primary structure comprises 78 residues: Polcalcin Phl p 7 (78 aa).

2 consecutive EF-hand domains span residues 1 to 35 and 35 to 70; these read MADD…LGST and TSAD…NPGL. Ca(2+) is bound by residues Asp-13, Asn-15, Asp-17, Lys-19, Glu-24, Asp-48, Asp-50, Asp-52, and Glu-59.

As to quaternary structure, monomer. As to expression, specifically expressed in pollen.

In terms of biological role, may be involved in the regulation of pollen-tube growth. The protein is Polcalcin Phl p 7 of Phleum pratense (Common timothy).